Reading from the N-terminus, the 790-residue chain is Protein SEY1 (790 aa).

Topologically, residues 1–692 (MELSEGELSH…KRSIVQHITQ (692 aa)) are cytoplasmic. In terms of domain architecture, GB1/RHD3-type G spans 55–284 (GNNYHIISVF…VSNELFKPEY (230 aa)). 65–72 (GSQSTGKS) provides a ligand contact to GTP. The chain crosses the membrane as a helical span at residues 693-713 (IPYYIYLIILVLGWNEFMAII). The Lumenal portion of the chain corresponds to 714-716 (RNP). The chain crosses the membrane as a helical span at residues 717–737 (LFFSLSIVLGATVYVLYYLGL). The Cytoplasmic segment spans residues 738-790 (LRPALVVAQRTMDEVIVMAKTKLREVLIDDHEVTGRQLNKMAGSKENIELDDM).

This sequence belongs to the TRAFAC class dynamin-like GTPase superfamily. GB1/RHD3 GTPase family. RHD3 subfamily.

The protein localises to the endoplasmic reticulum membrane. Functionally, cooperates with the reticulon proteins and tubule-shaping DP1 family proteins to generate and maintain the structure of the tubular endoplasmic reticulum network. Has GTPase activity, which is required for its function in ER organization. The sequence is that of Protein SEY1 from Candida albicans (strain WO-1) (Yeast).